Reading from the N-terminus, the 366-residue chain is Carbamoyl phosphate synthase small chain (366 aa).

The interval 1-171 (MLEKRYLVLE…KTPYVSTGSD (171 aa)) is CPSase. Residues S47, G221, and G223 each contribute to the L-glutamine site. Positions 173–360 (SVVLLDFGKK…ITMMKDFKEK (188 aa)) constitute a Glutamine amidotransferase type-1 domain. Catalysis depends on C248, which acts as the Nucleophile. Residues L249, Q252, N290, G292, and Y293 each coordinate L-glutamine. Active-site residues include H333 and E335.

Belongs to the CarA family. Composed of two chains; the small (or glutamine) chain promotes the hydrolysis of glutamine to ammonia, which is used by the large (or ammonia) chain to synthesize carbamoyl phosphate. Tetramer of heterodimers (alpha,beta)4.

The catalysed reaction is hydrogencarbonate + L-glutamine + 2 ATP + H2O = carbamoyl phosphate + L-glutamate + 2 ADP + phosphate + 2 H(+). It carries out the reaction L-glutamine + H2O = L-glutamate + NH4(+). It functions in the pathway amino-acid biosynthesis; L-arginine biosynthesis; carbamoyl phosphate from bicarbonate: step 1/1. Its pathway is pyrimidine metabolism; UMP biosynthesis via de novo pathway; (S)-dihydroorotate from bicarbonate: step 1/3. In terms of biological role, small subunit of the glutamine-dependent carbamoyl phosphate synthetase (CPSase). CPSase catalyzes the formation of carbamoyl phosphate from the ammonia moiety of glutamine, carbonate, and phosphate donated by ATP, constituting the first step of 2 biosynthetic pathways, one leading to arginine and/or urea and the other to pyrimidine nucleotides. The small subunit (glutamine amidotransferase) binds and cleaves glutamine to supply the large subunit with the substrate ammonia. The protein is Carbamoyl phosphate synthase small chain of Staphylococcus epidermidis (strain ATCC 35984 / DSM 28319 / BCRC 17069 / CCUG 31568 / BM 3577 / RP62A).